The sequence spans 174 residues: Interleukin-1 receptor antagonist protein (174 aa).

An N-terminal signal peptide occupies residues 1-23 (MDIYIHGYLICLLLFLFRSETAC). Cys89 and Cys139 are oxidised to a cystine. N-linked (GlcNAc...) asparagine glycosylation is present at Asn107.

This sequence belongs to the IL-1 family.

It is found in the secreted. In terms of biological role, anti-inflammatory antagonist of interleukin-1 family of proinflammatory cytokines such as interleukin-1beta/IL1B and interleukin-1alpha/IL1A. Protects from immune dysregulation and uncontrolled systemic inflammation triggered by IL1 for a range of innate stimulatory agents such as pathogens. The sequence is that of Interleukin-1 receptor antagonist protein (IL1RN) from Bos taurus (Bovine).